A 248-amino-acid polypeptide reads, in one-letter code: Phosphate import ATP-binding protein PstB (248 aa).

The 243-residue stretch at 1–243 (MAVNDVNVFY…PQHNLTQGYI (243 aa)) folds into the ABC transporter domain. 33–40 (GPSGCGKS) provides a ligand contact to ATP.

Belongs to the ABC transporter superfamily. Phosphate importer (TC 3.A.1.7) family. In terms of assembly, the complex is composed of two ATP-binding proteins (PstB), two transmembrane proteins (PstC and PstA) and a solute-binding protein (PstS).

Its subcellular location is the cell inner membrane. It carries out the reaction phosphate(out) + ATP + H2O = ADP + 2 phosphate(in) + H(+). In terms of biological role, part of the ABC transporter complex PstSACB involved in phosphate import. Responsible for energy coupling to the transport system. In Rhodospirillum rubrum (strain ATCC 11170 / ATH 1.1.1 / DSM 467 / LMG 4362 / NCIMB 8255 / S1), this protein is Phosphate import ATP-binding protein PstB.